The chain runs to 881 residues: Valine--tRNA ligase (881 aa).

The 'HIGH' region signature appears at 48–58 (PNITGKLHLGH). The 'KMSKS' region motif lies at 527–531 (KMSKS). K530 is an ATP binding site. 2 coiled-coil regions span residues 721 to 747 (KNETSENAMNQIIEAIKSIRNVRAEMN) and 811 to 881 (LLDL…AALK).

Belongs to the class-I aminoacyl-tRNA synthetase family. ValS type 1 subfamily. In terms of assembly, monomer.

It localises to the cytoplasm. It carries out the reaction tRNA(Val) + L-valine + ATP = L-valyl-tRNA(Val) + AMP + diphosphate. Its function is as follows. Catalyzes the attachment of valine to tRNA(Val). As ValRS can inadvertently accommodate and process structurally similar amino acids such as threonine, to avoid such errors, it has a 'posttransfer' editing activity that hydrolyzes mischarged Thr-tRNA(Val) in a tRNA-dependent manner. This Clostridium acetobutylicum (strain ATCC 824 / DSM 792 / JCM 1419 / IAM 19013 / LMG 5710 / NBRC 13948 / NRRL B-527 / VKM B-1787 / 2291 / W) protein is Valine--tRNA ligase.